The primary structure comprises 551 residues: Calcium-dependent protein kinase 19 (551 aa).

Glycine 2 carries the N-myristoyl glycine lipid modification. The disordered stretch occupies residues 12–46; sequence VKKPTPDISGEQNTEVKSREITPKEQPRQRQPAPR. Residues 25 to 39 are compositionally biased toward basic and acidic residues; it reads TEVKSREITPKEQPR. Residues 98–357 form the Protein kinase domain; it reads YSLGRELGRG…AAQVLEHPWI (260 aa). ATP-binding positions include 104-112 and lysine 127; that span reads LGRGQFGIT. Aspartate 222 functions as the Proton acceptor in the catalytic mechanism. Serine 263 carries the phosphoserine modification. Positions 363-393 are autoinhibitory domain; that stretch reads ASDKPIDSAVLSRMKQLRAMNKLKKLAFKFI. EF-hand domains lie at 400 to 435, 436 to 471, 472 to 507, and 512 to 542; these read EELKGLKTMFANMDTDKSGTITYDELKSGLEKLGSR, LTETEVKQLLEDADVDGNGTIDYIEFISATMNRFRV, EREDNLFKAFQHFDKDNSGFISRQELETAMKEYNMG, and IKEIISEVDADNDGSINYQEFCNMMKSCSQS. Positions 413, 415, 417, 419, 424, 449, 451, 453, 455, 460, 485, 487, 489, 496, 520, 522, 524, 526, and 531 each coordinate Ca(2+).

It belongs to the protein kinase superfamily. Ser/Thr protein kinase family. CDPK subfamily.

Its subcellular location is the membrane. It catalyses the reaction L-seryl-[protein] + ATP = O-phospho-L-seryl-[protein] + ADP + H(+). It carries out the reaction L-threonyl-[protein] + ATP = O-phospho-L-threonyl-[protein] + ADP + H(+). Activated by calcium. Autophosphorylation may play an important role in the regulation of the kinase activity. May play a role in signal transduction pathways that involve calcium as a second messenger. The sequence is that of Calcium-dependent protein kinase 19 (CPK19) from Arabidopsis thaliana (Mouse-ear cress).